Reading from the N-terminus, the 224-residue chain is Ribosomal RNA small subunit methyltransferase G (224 aa).

Residues Gly92, Leu97, 143–144 (VE), and Arg156 contribute to the S-adenosyl-L-methionine site.

Belongs to the methyltransferase superfamily. RNA methyltransferase RsmG family.

It is found in the cytoplasm. The catalysed reaction is guanosine(527) in 16S rRNA + S-adenosyl-L-methionine = N(7)-methylguanosine(527) in 16S rRNA + S-adenosyl-L-homocysteine. In terms of biological role, specifically methylates the N7 position of guanine in position 527 of 16S rRNA. The sequence is that of Ribosomal RNA small subunit methyltransferase G from Albidiferax ferrireducens (strain ATCC BAA-621 / DSM 15236 / T118) (Rhodoferax ferrireducens).